Reading from the N-terminus, the 321-residue chain is MKNNIGIIISNVGTPSHPNKKSVKKYLSEFLSDKRVIDISRFFWIPYLHLYFLPLKSYKSVNLYKKIWEKDGSPLMINSLNQRNYLINKFPNFKIELGMRYGDPSICVAIKKMIKIYNVNKLIILPMYPQYSCTTTASVLDSVCEVIKKYRNIPSIIFIRDYADNINYINAITNSIKKSFNKNGIPEMLIMSFHGIPKKYIKDGDDYLKRCNVTKKLVLSKLNFSRKKVIMSFQSKFGNIPWITPITSEVISFLPKKGIKNIQVICPGFSSDCLETLEEIKIQNKKIFKDNGGKKFHYIPALNYSKIHIECLANIIRTHLK.

Residues His194 and Glu275 each contribute to the Fe cation site.

The protein belongs to the ferrochelatase family.

The protein resides in the cytoplasm. It catalyses the reaction heme b + 2 H(+) = protoporphyrin IX + Fe(2+). The protein operates within porphyrin-containing compound metabolism; protoheme biosynthesis; protoheme from protoporphyrin-IX: step 1/1. Its function is as follows. Catalyzes the ferrous insertion into protoporphyrin IX. This is Ferrochelatase from Wigglesworthia glossinidia brevipalpis.